The primary structure comprises 156 residues: Small ribosomal subunit protein uS7 (156 aa).

This sequence belongs to the universal ribosomal protein uS7 family. As to quaternary structure, part of the 30S ribosomal subunit. Contacts proteins S9 and S11.

Functionally, one of the primary rRNA binding proteins, it binds directly to 16S rRNA where it nucleates assembly of the head domain of the 30S subunit. Is located at the subunit interface close to the decoding center, probably blocks exit of the E-site tRNA. The protein is Small ribosomal subunit protein uS7 of Symbiobacterium thermophilum (strain DSM 24528 / JCM 14929 / IAM 14863 / T).